A 641-amino-acid polypeptide reads, in one-letter code: 1-deoxy-D-xylulose-5-phosphate synthase (641 aa).

Thiamine diphosphate is bound by residues H79 and 120–122; that span reads AHS. D151 contributes to the Mg(2+) binding site. Thiamine diphosphate-binding positions include 152-153, N180, Y290, and E372; that span reads GS. N180 is a Mg(2+) binding site.

It belongs to the transketolase family. DXPS subfamily. Homodimer. It depends on Mg(2+) as a cofactor. The cofactor is thiamine diphosphate.

The enzyme catalyses D-glyceraldehyde 3-phosphate + pyruvate + H(+) = 1-deoxy-D-xylulose 5-phosphate + CO2. Its pathway is metabolic intermediate biosynthesis; 1-deoxy-D-xylulose 5-phosphate biosynthesis; 1-deoxy-D-xylulose 5-phosphate from D-glyceraldehyde 3-phosphate and pyruvate: step 1/1. In terms of biological role, catalyzes the acyloin condensation reaction between C atoms 2 and 3 of pyruvate and glyceraldehyde 3-phosphate to yield 1-deoxy-D-xylulose-5-phosphate (DXP). This Rhodopseudomonas palustris (strain BisB18) protein is 1-deoxy-D-xylulose-5-phosphate synthase.